The primary structure comprises 244 residues: Chlorosome protein I (244 aa).

In terms of domain architecture, 2Fe-2S ferredoxin-type spans 1 to 95 (MNLIINDKTA…TVKVLSRPEE (95 aa)). C33, C39, C42, and C77 together coordinate [2Fe-2S] cluster.

[2Fe-2S] cluster serves as cofactor.

The protein localises to the chlorosome. In terms of biological role, could play a direct role in the oxidation or reduction of the quenching species formed in the chlorosome. This is Chlorosome protein I (csmI) from Chlorobaculum tepidum (strain ATCC 49652 / DSM 12025 / NBRC 103806 / TLS) (Chlorobium tepidum).